We begin with the raw amino-acid sequence, 315 residues long: Peroxidase 1 (315 aa).

Positions 1 to 21 are cleaved as a signal peptide; the sequence is MASSSYTSLLVLVALVTAASA. Position 22 is a pyrrolidone carboxylic acid (glutamine 22). Disulfide bonds link cysteine 32–cysteine 107, cysteine 65–cysteine 70, cysteine 113–cysteine 310, and cysteine 193–cysteine 219. Histidine 63 (proton acceptor) is an active-site residue. Residues aspartate 64, valine 67, glycine 69, aspartate 71, and serine 73 each contribute to the Ca(2+) site. Proline 155 lines the substrate pocket. The N-linked (GlcNAc...) asparagine glycan is linked to asparagine 158. Histidine 186 is a heme b binding site. Threonine 187 contacts Ca(2+). Ca(2+)-binding residues include aspartate 234, threonine 237, and aspartate 242. N-linked (GlcNAc...) asparagine glycosylation occurs at asparagine 265.

The protein belongs to the peroxidase family. Classical plant (class III) peroxidase subfamily. Ca(2+) serves as cofactor. The cofactor is heme b.

The protein resides in the secreted. The enzyme catalyses 2 a phenolic donor + H2O2 = 2 a phenolic radical donor + 2 H2O. Functionally, removal of H(2)O(2), oxidation of toxic reductants, biosynthesis and degradation of lignin, suberization, auxin catabolism, response to environmental stresses such as wounding, pathogen attack and oxidative stress. These functions might be dependent on each isozyme/isoform in each plant tissue. In terms of biological role, involved in defense response to powdery meldew fungus. This is Peroxidase 1 from Hordeum vulgare (Barley).